Reading from the N-terminus, the 392-residue chain is Phosphopentomutase (392 aa).

Asp-13, Asp-286, His-291, Asp-327, His-328, and His-339 together coordinate Mn(2+).

The protein belongs to the phosphopentomutase family. It depends on Mn(2+) as a cofactor.

It localises to the cytoplasm. It carries out the reaction 2-deoxy-alpha-D-ribose 1-phosphate = 2-deoxy-D-ribose 5-phosphate. It catalyses the reaction alpha-D-ribose 1-phosphate = D-ribose 5-phosphate. Its pathway is carbohydrate degradation; 2-deoxy-D-ribose 1-phosphate degradation; D-glyceraldehyde 3-phosphate and acetaldehyde from 2-deoxy-alpha-D-ribose 1-phosphate: step 1/2. Isomerase that catalyzes the conversion of deoxy-ribose 1-phosphate (dRib-1-P) and ribose 1-phosphate (Rib-1-P) to deoxy-ribose 5-phosphate (dRib-5-P) and ribose 5-phosphate (Rib-5-P), respectively. This is Phosphopentomutase from Oceanobacillus iheyensis (strain DSM 14371 / CIP 107618 / JCM 11309 / KCTC 3954 / HTE831).